A 293-amino-acid chain; its full sequence is Small ribosomal subunit protein uS2 (293 aa).

A disordered region spans residues 239–293; the sequence is PAGGADWEAAPAGFPAAATGEWSEAQPATWESGAAAATGPSTEWADSAPKDTAGW. The span at 247–256 shows a compositional bias: low complexity; it reads AAPAGFPAAA.

Belongs to the universal ribosomal protein uS2 family. As to quaternary structure, component of the small ribosomal subunit. Mature ribosomes consist of a small (40S) and a large (60S) subunit. The 40S subunit contains about 33 different proteins and 1 molecule of RNA (18S). The 60S subunit contains about 49 different proteins and 3 molecules of RNA (25S, 5.8S and 5S). Interacts with RPS21.

Its subcellular location is the cytoplasm. In terms of biological role, required for the assembly and/or stability of the 40S ribosomal subunit. Required for the processing of the 20S rRNA-precursor to mature 18S rRNA in a late step of the maturation of 40S ribosomal subunits. The polypeptide is Small ribosomal subunit protein uS2 (Chaetomium globosum (strain ATCC 6205 / CBS 148.51 / DSM 1962 / NBRC 6347 / NRRL 1970) (Soil fungus)).